We begin with the raw amino-acid sequence, 321 residues long: Cytochrome c biogenesis protein CcsA (321 aa).

8 helical membrane-spanning segments follow: residues 17-37 (VVSI…FVGL), 48-68 (TFFC…HLPI), 71-91 (LYES…VPYF), 98-118 (LSTI…WGLL), 143-163 (MVSG…LLVI), 225-245 (ILSI…VWAN), 259-273 (TWAF…IYFH), and 286-306 (AIVA…VNLL).

This sequence belongs to the CcmF/CycK/Ccl1/NrfE/CcsA family. May interact with Ccs1.

Its subcellular location is the plastid. It is found in the chloroplast thylakoid membrane. In terms of biological role, required during biogenesis of c-type cytochromes (cytochrome c6 and cytochrome f) at the step of heme attachment. In Populus trichocarpa (Western balsam poplar), this protein is Cytochrome c biogenesis protein CcsA.